The following is a 4690-amino-acid chain: Nonribosomal peptide synthetase sidN (4690 aa).

Residues 238 to 656 (ARVRENPGRI…LGRLSSDQIK (419 aa)) are adenylation 1. In terms of domain architecture, Carrier 1 spans 779 to 856 (SSSIPMLQSV…DLDTKAQQAL (78 aa)). Position 816 is an O-(pantetheine 4'-phosphoryl)serine (S816). Residues 924-1175 (APGGKAFIQH…AFGNTMSDRF (252 aa)) are condensation 1. The interval 1349–1760 (EFAQKSPNAI…GRKDDLVKIR (412 aa)) is adenylation 2. Residues 1889–1965 (PAWCIKHRPL…DLINHLSVKR (77 aa)) enclose the Carrier 2 domain. S1926 carries the O-(pantetheine 4'-phosphoryl)serine modification. Residues 2001 to 2285 (PTTVFQDGML…SERLLESQLV (285 aa)) form a condensation 2 region. The tract at residues 2464–2869 (TWAKTHPEWK…GRKDEQVKVR (406 aa)) is adenylation 3. In terms of domain architecture, Carrier 3 spans 3002-3079 (RDLTSIEKQI…ELGRMKNALK (78 aa)). S3040 carries the O-(pantetheine 4'-phosphoryl)serine modification. Residues 3121-3530 (CMPLQEVLVA…QMESLVTSFT (410 aa)) form a condensation 3 region. The Carrier 4 domain maps to 3564-3637 (SVLEQQIRDV…KLATHIQTTS (74 aa)). Position 3598 is an O-(pantetheine 4'-phosphoryl)serine (S3598). Residues 3679–4087 (VYPLTPLQAG…FESIRKHPDE (409 aa)) are condensation 4. In terms of domain architecture, Carrier 5 spans 4119–4195 (SAIDQFLDPL…KLCEVAFAKS (77 aa)). S4156 is subject to O-(pantetheine 4'-phosphoryl)serine. The segment at 4262-4589 (WVFKAENGLD…FNAHLNILWN (328 aa)) is condensation 5.

The protein belongs to the NRP synthetase family.

Its pathway is siderophore biosynthesis. In terms of biological role, nonribosomal peptide synthetase required for the biosynthetis of epichloenin A, an extracellular siderophore that plays a crucial role in endophyte-grass symbioses. SidN assembles epichloenin A by activating and incorporating three trans-anhydromevalonylhydroxyornithine (trans-AMHO), 1 glutamine and 4 glycine moieties. Trans-AMHO is produced from L-ornithine via 2 steps involving a L-ornithine N(5)-monooxygenase and an AHMO-N(5)-transacylase that have still to be identified. The third adenylation domain (A3) of sidN incorporates the hydroxamate groups of the siderophore which forms an octahedral iron complex. The other component amino acids are assembled by sidN adenylation domains A1 and A2. The sequence is that of Nonribosomal peptide synthetase sidN from Epichloe festucae (strain Fl1).